Here is a 129-residue protein sequence, read N- to C-terminus: Large ribosomal subunit protein bL19 (129 aa).

It belongs to the bacterial ribosomal protein bL19 family.

Functionally, this protein is located at the 30S-50S ribosomal subunit interface and may play a role in the structure and function of the aminoacyl-tRNA binding site. This Rhizorhabdus wittichii (strain DSM 6014 / CCUG 31198 / JCM 15750 / NBRC 105917 / EY 4224 / RW1) (Sphingomonas wittichii) protein is Large ribosomal subunit protein bL19.